The primary structure comprises 342 residues: MHIGGGVVKIRILILLMLALFLLGCSSNVNTNVKLKVFHAGSLTEPMKAFKRAFEEKHPNVEVQTEAAGSAATIRKVTELGRKADVIATADYTLIQKMMYPEFANWTIMFAKNQIVLAYRNDSRYADEINSQNWYEILKRPDVRFGFSNPNDDPCGYRSLMAIQLAELYYNDPTIFDELVAKNSNLRFSEDNGSYVLRMPSSERIEINKSKIMIRSMEMELIHLVESGELDYFFIYKSVAKQHGFNFVELPVEIDLSSPDYAELYSKVKVVLANGKEVTGKPIVYGITIPKNAENRELAVEFVKLVISEEGQEILRELGQEPLVPPRADTAVPSLKAMVEVS.

The signal sequence occupies residues 1 to 24 (MHIGGGVVKIRILILLMLALFLLG). Molybdate-binding positions include 41–42 (GS), Ser-70, 153–155 (DPC), Glu-218, and Tyr-236. Tungstate-binding positions include 41 to 42 (GS), Ser-70, 153 to 155 (DPC), Glu-218, and Tyr-236.

It belongs to the bacterial solute-binding protein 1 family. WtpA subfamily. The complex is composed of two ATP-binding proteins (WtpC), two transmembrane proteins (WtpB) and a solute-binding protein (WtpA).

The protein resides in the cell membrane. Its function is as follows. Part of the ABC transporter complex WtpABC involved in molybdate/tungstate import. Binds tungstate and molybdate. This is Molybdate/tungstate-binding protein WtpA (wtpA) from Archaeoglobus fulgidus (strain ATCC 49558 / DSM 4304 / JCM 9628 / NBRC 100126 / VC-16).